We begin with the raw amino-acid sequence, 614 residues long: Interleukin-18 receptor accessory protein (614 aa).

Positions 1–19 (MLCLGWVFLWFVAGEKTTG) are cleaved as a signal peptide. At 20–356 (FNHSACATKK…RTIRLRKKEE (337 aa)) the chain is on the extracellular side. Residue asparagine 21 is glycosylated (N-linked (GlcNAc...) asparagine). Cysteines 46 and 126 form a disulfide. Residues 59 to 78 (ASQLSPTQSPAHKPCSGSQK) are disordered. 2 Ig-like C2-type domains span residues 148-234 (PQRN…WTVR) and 250-352 (PEIL…IRLR). Asparagine 151 carries an N-linked (GlcNAc...) asparagine glycan. 3 disulfides stabilise this stretch: cysteine 154/cysteine 179, cysteine 174/cysteine 220, and cysteine 179/cysteine 220. Asparagine 227 carries an N-linked (GlcNAc...) asparagine glycan. A disulfide bond links cysteine 272 and cysteine 336. A glycan (N-linked (GlcNAc...) asparagine) is linked at asparagine 344. A helical membrane pass occupies residues 357 to 377 (VVFVYILLGTALMLVGVLVAA). The Cytoplasmic portion of the chain corresponds to 378–614 (AFLYWYWIEV…LLLYSDQKRC (237 aa)). The region spanning 405–558 (KEFDAFVSYS…RFWTQIRYHM (154 aa)) is the TIR domain. Glutamate 492 is a catalytic residue.

It belongs to the interleukin-1 receptor family. Forms a ternary complex with IL18 and IL18R1. Within this complex, IL18R1 is involved in ligand-binding and IL18RAP in signaling leading to NF-kappa-B and JNK activation.

Its subcellular location is the cell membrane. It carries out the reaction NAD(+) + H2O = ADP-D-ribose + nicotinamide + H(+). Functionally, within the IL18 receptor complex, does not mediate IL18-binding, but involved in IL18-dependent signal transduction, leading to NF-kappa-B and JNK activation. May play a role in IL18-mediated IFNG synthesis from T-helper 1 (Th1) cells. The sequence is that of Interleukin-18 receptor accessory protein from Mus musculus (Mouse).